The chain runs to 342 residues: Probable dual-specificity RNA methyltransferase RlmN (342 aa).

The active-site Proton acceptor is the E91. The region spanning 97–326 (YKFGNTACVS…CTVRRELGSD (230 aa)) is the Radical SAM core domain. C104 and C331 form a disulfide bridge. 3 residues coordinate [4Fe-4S] cluster: C111, C115, and C118. S-adenosyl-L-methionine is bound by residues 157 to 158 (GE), S189, 212 to 214 (SLH), and N288. C331 functions as the S-methylcysteine intermediate in the catalytic mechanism.

This sequence belongs to the radical SAM superfamily. RlmN family. It depends on [4Fe-4S] cluster as a cofactor.

The protein localises to the cytoplasm. The catalysed reaction is adenosine(2503) in 23S rRNA + 2 reduced [2Fe-2S]-[ferredoxin] + 2 S-adenosyl-L-methionine = 2-methyladenosine(2503) in 23S rRNA + 5'-deoxyadenosine + L-methionine + 2 oxidized [2Fe-2S]-[ferredoxin] + S-adenosyl-L-homocysteine. It carries out the reaction adenosine(37) in tRNA + 2 reduced [2Fe-2S]-[ferredoxin] + 2 S-adenosyl-L-methionine = 2-methyladenosine(37) in tRNA + 5'-deoxyadenosine + L-methionine + 2 oxidized [2Fe-2S]-[ferredoxin] + S-adenosyl-L-homocysteine. Functionally, specifically methylates position 2 of adenine 2503 in 23S rRNA and position 2 of adenine 37 in tRNAs. This Caldanaerobacter subterraneus subsp. tengcongensis (strain DSM 15242 / JCM 11007 / NBRC 100824 / MB4) (Thermoanaerobacter tengcongensis) protein is Probable dual-specificity RNA methyltransferase RlmN.